The sequence spans 88 residues: Small ribosomal subunit protein bS20 (88 aa).

A disordered region spans residues 1–20; that stretch reads MANIKQQKKRNKTNEKRRLR.

This sequence belongs to the bacterial ribosomal protein bS20 family.

Functionally, binds directly to 16S ribosomal RNA. This chain is Small ribosomal subunit protein bS20, found in Phytoplasma australiense.